The sequence spans 369 residues: Anhydro-N-acetylmuramic acid kinase (369 aa).

12–19 (GTSLDGVD) serves as a coordination point for ATP.

It belongs to the anhydro-N-acetylmuramic acid kinase family.

It carries out the reaction 1,6-anhydro-N-acetyl-beta-muramate + ATP + H2O = N-acetyl-D-muramate 6-phosphate + ADP + H(+). The protein operates within amino-sugar metabolism; 1,6-anhydro-N-acetylmuramate degradation. It functions in the pathway cell wall biogenesis; peptidoglycan recycling. Functionally, catalyzes the specific phosphorylation of 1,6-anhydro-N-acetylmuramic acid (anhMurNAc) with the simultaneous cleavage of the 1,6-anhydro ring, generating MurNAc-6-P. Is required for the utilization of anhMurNAc either imported from the medium or derived from its own cell wall murein, and thus plays a role in cell wall recycling. The chain is Anhydro-N-acetylmuramic acid kinase from Shigella boydii serotype 18 (strain CDC 3083-94 / BS512).